Reading from the N-terminus, the 102-residue chain is Small ribosomal subunit protein uS10 (102 aa).

The protein belongs to the universal ribosomal protein uS10 family. Part of the 30S ribosomal subunit.

Involved in the binding of tRNA to the ribosomes. The chain is Small ribosomal subunit protein uS10 from Caulobacter sp. (strain K31).